We begin with the raw amino-acid sequence, 348 residues long: Chloroacetanilide N-alkylformylase, oxygenase component (348 aa).

In terms of domain architecture, Rieske spans 7 to 108 (WYAVAWCDEV…ARERHKLIWA (102 aa)). Cys-47, His-49, Cys-66, and His-69 together coordinate [2Fe-2S] cluster. Fe cation-binding residues include His-159 and His-164. His-250 contacts substrate. Asp-293 is a binding site for Fe cation.

As to quaternary structure, the chloroacetanilide N-alkylformylase multicomponent enzyme system is composed of an oxygenase component (CndA) and an electron transfer component formed by a ferredoxin reductase (CndC1) and a ferredoxin (CndB1). In vitro, chloroacetanilide N-alkylformylase assays in which CndB1 is substituted for CndB2 demonstrate that the two enzymes possess nearly identical activities. [2Fe-2S] cluster serves as cofactor.

It catalyses the reaction butachlor + 2 reduced [2Fe-2S]-[ferredoxin] + O2 + 2 H(+) = butyl formate + N-(2,6-diethylphenyl)-2-chloroacetamide + 2 oxidized [2Fe-2S]-[ferredoxin] + H2O. It carries out the reaction alachlor + 2 reduced [2Fe-2S]-[ferredoxin] + O2 + 2 H(+) = methyl formate + N-(2,6-diethylphenyl)-2-chloroacetamide + 2 oxidized [2Fe-2S]-[ferredoxin] + H2O. The catalysed reaction is acetochlor + 2 reduced [2Fe-2S]-[ferredoxin] + O2 + 2 H(+) = N-(2-ethyl-6-methylphenyl)-2-chloroacetamide + ethyl formate + 2 oxidized [2Fe-2S]-[ferredoxin] + H2O. Its activity is regulated as follows. Activity enhanced by Fe(2+) and Mg(2+) ions. Divalent cations such as Ca(2+), Cr(2+), Co(2+), and Mn(2+) show moderate inhibition of the enzyme, whereas heavy metal ions such as Ag(+), Cu(2+), Pb(2+), Hg(2+), Ni(2+) and Zn(2+) severely inhibit the activity. Component of the chloroacetanilide N-alkylformylase multicomponent enzyme system involved in the degradation of chloroacetanilide herbicides (N-alkoxyalkyl-N-chloroacetyl-substituted aniline derivatives). In vitro, catalyzes the N-dealkylation of butachlor, alachlor and acetochlor to yield 2-chloro-N-(2,6-diethylphenyl)acetamide (CDEPA) (for alachlor and butachlor) and 2-chloro-N-(2-methyl-6-ethylphenyl)acetamide (CMEPA) (for acetochlor). The sequence is that of Chloroacetanilide N-alkylformylase, oxygenase component from Rhizorhabdus wittichii (strain DC-6 / KACC 16600) (Sphingomonas wittichii).